The following is a 121-amino-acid chain: Large ribosomal subunit protein bL12 (121 aa).

It belongs to the bacterial ribosomal protein bL12 family. In terms of assembly, homodimer. Part of the ribosomal stalk of the 50S ribosomal subunit. Forms a multimeric L10(L12)X complex, where L10 forms an elongated spine to which 2 to 4 L12 dimers bind in a sequential fashion. Binds GTP-bound translation factors.

Its function is as follows. Forms part of the ribosomal stalk which helps the ribosome interact with GTP-bound translation factors. Is thus essential for accurate translation. The polypeptide is Large ribosomal subunit protein bL12 (Baumannia cicadellinicola subsp. Homalodisca coagulata).